The chain runs to 158 residues: Placenta growth factor (158 aa).

An N-terminal signal peptide occupies residues 1 to 18; that stretch reads MLVMKLFTCFLQVLAGLA. N-linked (GlcNAc...) asparagine glycans are attached at residues Asn29 and Asn30. Cystine bridges form between Cys48–Cys90, Cys79–Cys125, and Cys83–Cys127. Asn97 carries N-linked (GlcNAc...) asparagine glycosylation. The segment at 136–158 is disordered; that stretch reads AERRKTKGKRKRSRNSQTEEPHP. Residues 137 to 149 are compositionally biased toward basic residues; the sequence is ERRKTKGKRKRSR.

Belongs to the PDGF/VEGF growth factor family. In terms of assembly, antiparallel homodimer; disulfide-linked. Also found as heterodimer with VEGFA/VEGF.

The protein localises to the secreted. Functionally, growth factor active in angiogenesis and endothelial cell growth, stimulating their proliferation and migration. It binds to the receptor FLT1/VEGFR-1. Also promotes cell tumor growth. This chain is Placenta growth factor (Pgf), found in Mus musculus (Mouse).